The following is a 428-amino-acid chain: D-amino acid dehydrogenase (428 aa).

3–17 is a binding site for FAD; sequence VVILGSGVVGVASAY.

Belongs to the DadA oxidoreductase family. The cofactor is FAD.

It carries out the reaction a D-alpha-amino acid + A + H2O = a 2-oxocarboxylate + AH2 + NH4(+). It functions in the pathway amino-acid degradation; D-alanine degradation; NH(3) and pyruvate from D-alanine: step 1/1. Functionally, oxidative deamination of D-amino acids. In Burkholderia pseudomallei (strain K96243), this protein is D-amino acid dehydrogenase.